The following is a 362-amino-acid chain: UPF0324 membrane protein YPO1307/y2878/YP_1285 (362 aa).

Transmembrane regions (helical) follow at residues 21-38, 48-70, 102-124, 139-161, 168-190, 240-257, 278-300, 305-327, and 334-356; these read YIPG…ALNV, GLGA…YPWL, VADV…FILA, VMLI…EPVL, VAVA…PWLY, MIRV…SAYL, WFAV…AVWV, TLDT…IGSI, and PLLL…NLFV.

The protein belongs to the UPF0324 family.

The protein localises to the cell membrane. This is UPF0324 membrane protein YPO1307/y2878/YP_1285 from Yersinia pestis.